The sequence spans 314 residues: Olfactory receptor 10A6 (314 aa).

Over 1–25 the chain is Extracellular; the sequence is MERQNQSCVVEFILLGFSNYPELQG. Asparagine 5 carries an N-linked (GlcNAc...) asparagine glycan. A helical membrane pass occupies residues 26–46; it reads QLFVAFLVIYLVTLIGNAIII. At 47-54 the chain is on the cytoplasmic side; it reads VIVSLDQS. The helical transmembrane segment at 55–75 threads the bilayer; the sequence is LHVPMYLFLLNLSVVDLSFSA. Topologically, residues 76-99 are extracellular; that stretch reads VIMPEMLVVLSTEKTTISFGGCFA. A disulfide bridge links cysteine 97 with cysteine 189. The helical transmembrane segment at 100-120 threads the bilayer; sequence QMYFILLFGGAECFLLGAMAY. The Cytoplasmic segment spans residues 121–139; the sequence is DRFAAICHPLNYQMIMNKG. The helical transmembrane segment at 140–160 threads the bilayer; that stretch reads VFMKLIIFSWALGFMLGTVQT. Topologically, residues 161–197 are extracellular; that stretch reads SWVSSFPFCGLNEINHISCETPAVLELACADTFLFEI. The helical transmembrane segment at 198-217 threads the bilayer; it reads YAFTGTFLIILVPFLLILLS. Residues 218-237 are Cytoplasmic-facing; the sequence is YIRVLFAILKMPSTTGRQKA. Residues 238–258 traverse the membrane as a helical segment; sequence FSTCAAHLTSVTLFYGTASMT. Residues 259–271 lie on the Extracellular side of the membrane; the sequence is YLQPKSGYSPETK. Residues 272-292 traverse the membrane as a helical segment; it reads KVMSLSYSLLTPLLNLLIYSL. Over 293-314 the chain is Cytoplasmic; it reads RNSEMKRALMKLWRRRVVLHTI.

This sequence belongs to the G-protein coupled receptor 1 family.

It localises to the cell membrane. Odorant receptor. In Homo sapiens (Human), this protein is Olfactory receptor 10A6 (OR10A6).